Reading from the N-terminus, the 697-residue chain is MSQEKKVFKTEWANRSLTIETGQLAKQANGAVLVRYGDTVVLSTAVASKEPRDGDFFPLMVNYEEKMYAAGKIPGGFKKREGRPSDEATLTARLIDRPIRPLFPKGYKYDVQIMNTVLSADPDCSPEMAAMIGSSMALSVSDIPFQGPIAGVKVGYIDGEYVINPTVAQKEVSRLDLEVAGHKDAVNMVEAGASEITESEMLEAIFFGHSEIQRLVNFQQEIVDHIQPKKKAFVPVEKDEVLVEKVKQLTQENGLKDAVLTFDKQQRDINLDALKEKVAAEFIDEEDADNEVLIKEVNSILNDLVKEEVRRLIAEEKIRPDGRKTDEIRPLESEVGVLPRAHGSGLFTRGQTQALSVLTLGSMSEYQILDGLGEEEQKRFMHHYNFPNYSVGETGPVRSPGRREIGHGALGERALSHIIPDLKDFPYTVRIVSEVLESNGSSSQASICGSTLALMDAGVPIKAPVAGIAMGLVTRDDSYTILTDIQGMEDALGDMDFKVAGTAEGITAIQMDIKIDGLTKEIIKEALDQAREGRLAILDHMLQTIDTSRSELSAFAPKVVTMTIKPEKIRDVIGPGGKKINEIIDETGVKLDIEQDGTIFIGAVDKDAIARARSIIEDITREAEVGQVYEGKVKRIEKYGAFVELFPGKDALVHISQIANERIDKVEDVLKVGDIFKIKVTEIDKQGRVNASHKALL.

Asp490 and Asp496 together coordinate Mg(2+). One can recognise a KH domain in the interval 557 to 616; sequence PKVVTMTIKPEKIRDVIGPGGKKINEIIDETGVKLDIEQDGTIFIGAVDKDAIARARSII. The S1 motif domain maps to 626 to 694; it reads GQVYEGKVKR…KQGRVNASHK (69 aa).

It belongs to the polyribonucleotide nucleotidyltransferase family. Mg(2+) serves as cofactor.

It is found in the cytoplasm. The enzyme catalyses RNA(n+1) + phosphate = RNA(n) + a ribonucleoside 5'-diphosphate. Its function is as follows. Involved in mRNA degradation. Catalyzes the phosphorolysis of single-stranded polyribonucleotides processively in the 3'- to 5'-direction. This Staphylococcus saprophyticus subsp. saprophyticus (strain ATCC 15305 / DSM 20229 / NCIMB 8711 / NCTC 7292 / S-41) protein is Polyribonucleotide nucleotidyltransferase.